The sequence spans 199 residues: Prolactin (199 aa).

Cys-4 and Cys-11 are joined by a disulfide. Ser-26 is modified (phosphoserine). A glycan (N-linked (GlcNAc...) asparagine; partial) is linked at Asn-31. Residues Ser-34 and Ser-90 each carry the phosphoserine modification. Disulfide bonds link Cys-58–Cys-174 and Cys-191–Cys-199.

Belongs to the somatotropin/prolactin family. Interacts with PRLR.

It localises to the secreted. Prolactin acts primarily on the mammary gland by promoting lactation. This Camelus dromedarius (Dromedary) protein is Prolactin (PRL).